Reading from the N-terminus, the 322-residue chain is Mas-related G-protein coupled receptor member X1 (322 aa).

Over 1–31 (MDPTISTLDTELTPINGTEETLCYKQTLSLT) the chain is Extracellular. Asn-16 carries N-linked (GlcNAc...) asparagine glycosylation. Residues 32 to 52 (VLTCIVSLVGLTGNAVVLWLL) form a helical membrane-spanning segment. At 53-67 (GCRMRRNAFSIYILN) the chain is on the cytoplasmic side. Residues 68-88 (LAAADFLFLSGRLIYSLLSFI) traverse the membrane as a helical segment. Over 89–96 (SIPHTISK) the chain is Extracellular. A helical membrane pass occupies residues 97 to 117 (ILYPVMMFSYFAGLSFLSAVS). Over 118-144 (TERCLSVLWPIWYRCHRPTHLSAVVCV) the chain is Cytoplasmic. The helical transmembrane segment at 145–165 (LLWALSLLRSILEWMLCGFLF) threads the bilayer. Residues 166–177 (SGADSAWCQTSD) are Extracellular-facing. Residues 178–198 (FITVAWLIFLCVVLCGSSLVL) form a helical membrane-spanning segment. Residues 199–221 (LIRILCGSRKIPLTRLYVTILLT) are Cytoplasmic-facing. The helical transmembrane segment at 222 to 242 (VLVFLLCGLPFGIQFFLFLWI) threads the bilayer. At 243-254 (HVDREVLFCHVH) the chain is on the extracellular side. Residues 255 to 275 (LVSIFLSALNSSANPIIYFFV) traverse the membrane as a helical segment. Over 276 to 322 (GSFRQRQNRQNLKLVLQRALQDASEVDEGGGQLPEEILELSGSRLEQ) the chain is Cytoplasmic.

It belongs to the G-protein coupled receptor 1 family. Mas subfamily. Uniquely localized in a subset of small dorsal root and trigeminal sensory neurons.

Its subcellular location is the cell membrane. Orphan receptor. Probably involved in the function of nociceptive neurons. May regulate nociceptor function and/or development, including the sensation or modulation of pain. Potently activated by enkephalins including BAM22 (bovine adrenal medulla peptide 22) and BAM (8-22). BAM22 is the most potent compound and evoked a large and dose-dependent release of intracellular calcium in stably transfected cells. G(alpha)q proteins are involved in the calcium-signaling pathway. Activated by the antimalarial drug, chloroquine. May mediate chloroquine-induced itch, in a histamine-independent manner. This chain is Mas-related G-protein coupled receptor member X1 (MRGPRX1), found in Homo sapiens (Human).